The following is a 428-amino-acid chain: Adenylosuccinate synthetase (428 aa).

GTP contacts are provided by residues 12 to 18 (GDEGKGK) and 40 to 42 (GHT). Catalysis depends on aspartate 13, which acts as the Proton acceptor. Mg(2+) contacts are provided by aspartate 13 and glycine 40. IMP contacts are provided by residues 13 to 16 (DEGK), 38 to 41 (NAGH), threonine 128, arginine 142, glutamine 223, threonine 238, and arginine 302. Residue histidine 41 is the Proton donor of the active site. 298–304 (VTTGRPR) is a substrate binding site. GTP is bound by residues arginine 304, 330-332 (KLD), and 412-414 (GVG).

It belongs to the adenylosuccinate synthetase family. As to quaternary structure, homodimer. Mg(2+) is required as a cofactor.

Its subcellular location is the cytoplasm. It carries out the reaction IMP + L-aspartate + GTP = N(6)-(1,2-dicarboxyethyl)-AMP + GDP + phosphate + 2 H(+). It participates in purine metabolism; AMP biosynthesis via de novo pathway; AMP from IMP: step 1/2. Plays an important role in the de novo pathway of purine nucleotide biosynthesis. Catalyzes the first committed step in the biosynthesis of AMP from IMP. In Halothermothrix orenii (strain H 168 / OCM 544 / DSM 9562), this protein is Adenylosuccinate synthetase.